Reading from the N-terminus, the 87-residue chain is Retinal rod rhodopsin-sensitive cGMP 3',5'-cyclic phosphodiesterase subunit gamma (87 aa).

An N-acetylmethionine modification is found at M1. Over residues 1-12 (MNLEPPKAEIRS) the composition is skewed to basic and acidic residues. A disordered region spans residues 1 to 55 (MNLEPPKAEIRSATRVMGGPVTPRKGPPKFKQRQTRQFKSKPPKKGVQGFGDDIP). Residues 26–44 (GPPKFKQRQTRQFKSKPPK) show a composition bias toward basic residues.

The protein belongs to the rod/cone cGMP-PDE gamma subunit family. As to quaternary structure, oligomer composed of two catalytic chains (alpha and beta), an inhibitory chain (gamma) and the delta chain.

The catalysed reaction is 3',5'-cyclic GMP + H2O = GMP + H(+). Its function is as follows. Participates in processes of transmission and amplification of the visual signal. cGMP-PDEs are the effector molecules in G-protein-mediated phototransduction in vertebrate rods and cones. The protein is Retinal rod rhodopsin-sensitive cGMP 3',5'-cyclic phosphodiesterase subunit gamma (PDE6G) of Bos taurus (Bovine).